The following is a 112-amino-acid chain: Putative pterin-4-alpha-carbinolamine dehydratase (112 aa).

It belongs to the pterin-4-alpha-carbinolamine dehydratase family.

The enzyme catalyses (4aS,6R)-4a-hydroxy-L-erythro-5,6,7,8-tetrahydrobiopterin = (6R)-L-erythro-6,7-dihydrobiopterin + H2O. The protein is Putative pterin-4-alpha-carbinolamine dehydratase of Vibrio campbellii (strain ATCC BAA-1116).